The chain runs to 454 residues: Tryptophanase (454 aa).

Lys256 is modified (N6-(pyridoxal phosphate)lysine).

It belongs to the beta-eliminating lyase family. In terms of assembly, homotetramer. It depends on pyridoxal 5'-phosphate as a cofactor.

It carries out the reaction L-tryptophan + H2O = indole + pyruvate + NH4(+). It functions in the pathway amino-acid degradation; L-tryptophan degradation via pyruvate pathway; indole and pyruvate from L-tryptophan: step 1/1. The protein is Tryptophanase (tnaA) of Rhodobacter capsulatus (Rhodopseudomonas capsulata).